Consider the following 407-residue polypeptide: BTB/POZ and MATH domain-containing protein 1 (407 aa).

Residues 33–167 form the MATH domain; that stretch reads NGFHEFKICG…ENSLLVRCRV (135 aa). In terms of domain architecture, BTB spans 203 to 270; sequence CDVVFQVDGE…IYWDELPDMQ (68 aa).

This sequence belongs to the Tdpoz family. Homodimer or heterodimer with BPM3, BPM5 and BPM6. Interacts with CUL3A and CUL3B. Interacts with RAP2-4 and RAP2-13. Binds to MYB56 at the promoter of FLOWERING LOCUS T (FT). As to expression, ubiquitous.

The protein resides in the nucleus. The protein operates within protein modification; protein ubiquitination. In terms of biological role, may act as a substrate-specific adapter of an E3 ubiquitin-protein ligase complex (CUL3-RBX1-BTB) which mediates the ubiquitination and subsequent proteasomal degradation of target proteins. The polypeptide is BTB/POZ and MATH domain-containing protein 1 (BPM1) (Arabidopsis thaliana (Mouse-ear cress)).